Consider the following 1002-residue polypeptide: Mannan endo-1,4-beta-mannosidase (1002 aa).

The N-terminal stretch at 1–28 is a signal peptide; sequence MKTTVTKLLATVAAASTIFGMSTLPAFA. The region spanning 49–396 is the GH26 domain; it reads AETRALFDKL…ADSNKNLMAS (348 aa). H144 provides a ligand contact to substrate. The active-site Proton donor is E205. Residues W210 and Y278 each coordinate substrate. E316 (nucleophile) is an active-site residue. A substrate-binding site is contributed by K384. 2 consecutive CBM11 domains span residues 523–703 and 717–897; these read VDNV…GKRD and AKAQ…NEQT. Disordered stretches follow at residues 702 to 722 and 888 to 969; these read RDAYAPNTNPTPGNTAKAQSV and PAEN…LSRT. Over residues 707 to 719 the composition is skewed to polar residues; it reads PNTNPTPGNTAKA. 2 stretches are compositionally biased toward basic and acidic residues: residues 897-913 and 952-966; these read TPKDESKTEVKADKEQE and PDTKEPADNTGKDGL. Positions 966 to 970 match the LPXTG sorting signal motif; sequence LSRTG. Position 969 is a pentaglycyl murein peptidoglycan amidated threonine (T969). Residues 970 to 1002 constitute a propeptide, removed by sortase; it reads GSNIISAIAAVAVLLLGGCAVLIARKRKGGDIE.

This sequence belongs to the glycosyl hydrolase 26 family. Homodimer.

Its subcellular location is the secreted. It localises to the cell wall. The enzyme catalyses Random hydrolysis of (1-&gt;4)-beta-D-mannosidic linkages in mannans, galactomannans and glucomannans.. Its function is as follows. Beta-mannanase likely involved in the utilization of carbohydrates in the human gut. Catalyzes the hydrolysis of different beta-1,4-linked mannans, such as ivory nut mannan, konjac glucomannan, as well as carob and guar gum galactomannans, to a mixture of oligosaccharides. The dominant product from ivory nut mannan is found to be mannotriose; mannobiose and mannotetraose are produced to a lesser extent. Does not hydrolyze mannobiose, and hydrolyzes mannotriose at a significantly lower rate than the longer oligosaccharides. This chain is Mannan endo-1,4-beta-mannosidase, found in Bifidobacterium adolescentis (strain ATCC 15703 / DSM 20083 / NCTC 11814 / E194a).